Here is a 425-residue protein sequence, read N- to C-terminus: Serine hydroxymethyltransferase (425 aa).

132–134 is a binding site for (6S)-5,6,7,8-tetrahydrofolate; sequence GHL. K237 bears the N6-(pyridoxal phosphate)lysine mark.

This sequence belongs to the SHMT family. As to quaternary structure, homodimer. Pyridoxal 5'-phosphate is required as a cofactor.

The protein localises to the cytoplasm. The enzyme catalyses (6R)-5,10-methylene-5,6,7,8-tetrahydrofolate + glycine + H2O = (6S)-5,6,7,8-tetrahydrofolate + L-serine. It participates in one-carbon metabolism; tetrahydrofolate interconversion. Its pathway is amino-acid biosynthesis; glycine biosynthesis; glycine from L-serine: step 1/1. Catalyzes the reversible interconversion of serine and glycine with tetrahydrofolate (THF) serving as the one-carbon carrier. This reaction serves as the major source of one-carbon groups required for the biosynthesis of purines, thymidylate, methionine, and other important biomolecules. Also exhibits THF-independent aldolase activity toward beta-hydroxyamino acids, producing glycine and aldehydes, via a retro-aldol mechanism. This Wolbachia sp. subsp. Brugia malayi (strain TRS) protein is Serine hydroxymethyltransferase.